A 128-amino-acid chain; its full sequence is Fluoride-specific ion channel FluC (128 aa).

The next 4 membrane-spanning stretches (helical) occupy residues 5–25 (IVAI…LSIG), 35–55 (LGTL…VVAF), 67–87 (LFVI…SVEV), and 96–116 (FGWA…LTGL). Na(+) is bound by residues glycine 75 and threonine 78.

The protein belongs to the fluoride channel Fluc/FEX (TC 1.A.43) family.

Its subcellular location is the cell inner membrane. The catalysed reaction is fluoride(in) = fluoride(out). With respect to regulation, na(+) is not transported, but it plays an essential structural role and its presence is essential for fluoride channel function. Functionally, fluoride-specific ion channel. Important for reducing fluoride concentration in the cell, thus reducing its toxicity. The polypeptide is Fluoride-specific ion channel FluC (Burkholderia thailandensis (strain ATCC 700388 / DSM 13276 / CCUG 48851 / CIP 106301 / E264)).